Here is a 256-residue protein sequence, read N- to C-terminus: Ciliary microtubule associated protein 1A (256 aa).

3 STPGR repeats span residues 66–92, 181–206, and 217–242; these read PGPGYLVPSNITVKGKDGTPAYSIYGR, PGPGTYRVIDPGTYKHKPPQYSMTAR, and PGPGAYSPEKVVMSKAQAPNFSFGIR. Residues 91-115 are disordered; it reads GRPRDISSFRTPGPGSYSPERAGKS.

Belongs to the CIMAP family.

Its subcellular location is the cytoplasm. It is found in the cytoskeleton. The protein resides in the flagellum axoneme. Its function is as follows. Outer dense fibers are filamentous structures located on the outside of the axoneme in the midpiece and principal piece of the mammalian sperm tail. May help to maintain the passive elastic structures and elastic recoil of the sperm tail. This Xenopus laevis (African clawed frog) protein is Ciliary microtubule associated protein 1A (cimap1a).